A 947-amino-acid chain; its full sequence is Pyruvate, phosphate dikinase 1, chloroplastic (947 aa).

Residues 1–71 (MPSVSRAVCV…PLRAVAAPIP (71 aa)) constitute a chloroplast transit peptide. Positions 39–60 (RHGKPEVAIRSGSGGSARGGHC) are disordered. A Phosphothreonine; by PDRP1 modification is found at threonine 527. Histidine 529 acts as the Tele-phosphohistidine intermediate in catalysis. Residues arginine 635, arginine 692, glutamate 821, glycine 842, threonine 843, asparagine 844, and aspartate 845 each coordinate substrate. Position 821 (glutamate 821) interacts with Mg(2+). Position 845 (aspartate 845) interacts with Mg(2+). The active-site Proton donor is cysteine 907.

Belongs to the PEP-utilizing enzyme family. As to quaternary structure, homotetramer. Mg(2+) serves as cofactor. In terms of processing, phosphorylation of Thr-527 in the dark inactivates the enzyme. Dephosphorylation upon light stimulation reactivates the enzyme. Phosphorylation increases during the first 20 days post-pollination and then remains constant through the 40-day mature seed stage. Reactivation by dephosphorylation during germination is negligible. As to expression, isoform 1 is only expressed in green leaves. Isoform 2 is found in roots, stems, rachis branches, leaf sheaths, green leaves and spikelets. The non-phosphorylated PPDK in mature seeds is endosperm-localized.

It localises to the plastid. The protein resides in the chloroplast. Its subcellular location is the cytoplasm. The catalysed reaction is pyruvate + phosphate + ATP = phosphoenolpyruvate + AMP + diphosphate + H(+). Activated by light-induced dephosphorylation. Inhibited by dark-induced phosphorylation. Both reactions are catalyzed by PDRP1. Its function is as follows. Formation of phosphoenolpyruvate. The cytoplasmic isoform supports the biosynthetic processes in the nascent endosperm and provides an efficient mechanism for glycolytic ATP synthesis in oxygen depleted tissues. May be involved in regulating the flux of carbon into starch and fatty acids of seeds and in the remobilization of nitrogen reserves in senescing leaves. This chain is Pyruvate, phosphate dikinase 1, chloroplastic (PPDK1), found in Oryza sativa subsp. japonica (Rice).